Here is a 288-residue protein sequence, read N- to C-terminus: uncharacterized protein (288 aa).

Residues 1-12 (MTEGRCAQHPDG) are compositionally biased toward basic and acidic residues. The disordered stretch occupies residues 1 to 20 (MTEGRCAQHPDGLDVQDVCD).

Belongs to the class IV-like SAM-binding methyltransferase superfamily. RNA methyltransferase TrmH family.

This is an uncharacterized protein from Mycobacterium bovis (strain ATCC BAA-935 / AF2122/97).